A 138-amino-acid chain; its full sequence is Putative pre-16S rRNA nuclease (138 aa).

Belongs to the YqgF nuclease family.

The protein localises to the cytoplasm. In terms of biological role, could be a nuclease involved in processing of the 5'-end of pre-16S rRNA. The chain is Putative pre-16S rRNA nuclease from Escherichia coli O157:H7.